Here is a 263-residue protein sequence, read N- to C-terminus: Antigen 10-3 (263 aa).

The first 21 residues, 1 to 21 (MNIYLIGILCIVGLIISQGST), serve as a signal peptide directing secretion. Residues 70-207 (GNKKDKQPTQ…QINDGTSDKP (138 aa)) form a disordered region. Residues 78-90 (TQKTTPKPTTPKQ) show a composition bias toward low complexity. 5 tandem repeats follow at residues 81-107 (TTPK…TIKR), 108-134 (TTPK…TIKR), 135-161 (TTPK…TIKR), 162-188 (TTPK…TIKR), and 189-206 (TTPK…TSDK). Positions 81 to 189 (TTPKPTTPKQ…TSDTHTIKRT (109 aa)) are 5 X 27 AA tandem repeats. 4 stretches are compositionally biased toward basic and acidic residues: residues 95–104 (TSDKTSDTHT), 122–131 (TSDKTSDTHT), 149–158 (TSDKTSDTHT), and 176–185 (TSDKTSDTHT).

The protein is Antigen 10-3 of Schistosoma mansoni (Blood fluke).